The chain runs to 60 residues: Short neurotoxin C (60 aa).

4 disulfide bridges follow: C3/C22, C17/C39, C41/C52, and C53/C58.

This sequence belongs to the three-finger toxin family. Short-chain subfamily. Type I alpha-neurotoxin sub-subfamily. In terms of tissue distribution, expressed by the venom gland.

The protein resides in the secreted. Functionally, binds to muscle nicotinic acetylcholine receptor (nAChR) and inhibit acetylcholine from binding to the receptor, thereby impairing neuromuscular transmission. This is Short neurotoxin C from Aipysurus laevis (Olive sea snake).